We begin with the raw amino-acid sequence, 140 residues long: Nucleoside diphosphate kinase (140 aa).

ATP-binding residues include lysine 11, phenylalanine 59, arginine 87, threonine 93, arginine 104, and asparagine 114. Histidine 117 serves as the catalytic Pros-phosphohistidine intermediate.

The protein belongs to the NDK family. Homotetramer. Requires Mg(2+) as cofactor.

The protein resides in the cytoplasm. It carries out the reaction a 2'-deoxyribonucleoside 5'-diphosphate + ATP = a 2'-deoxyribonucleoside 5'-triphosphate + ADP. The catalysed reaction is a ribonucleoside 5'-diphosphate + ATP = a ribonucleoside 5'-triphosphate + ADP. Its function is as follows. Major role in the synthesis of nucleoside triphosphates other than ATP. The ATP gamma phosphate is transferred to the NDP beta phosphate via a ping-pong mechanism, using a phosphorylated active-site intermediate. The chain is Nucleoside diphosphate kinase from Erythrobacter litoralis (strain HTCC2594).